We begin with the raw amino-acid sequence, 543 residues long: Capsid vertex component 2 (543 aa).

The interaction with major capsid protein/MCP stretch occupies residues 1–54; sequence MWKLEKKYILRQNPSVFLNGTAFWTPHPQNILHIDRNSLRETKKNASLYRTRLL. Positions 101 to 120 are disordered; sequence SPQLLPSPPKPLSPTTQSQP.

The protein belongs to the herpesviridae CVC2 protein family. As to quaternary structure, heterodimerizes with CVC1. Interacts with major capsid protein/MCP and triplex capsid protein 1/TRX1 at the pentamer vertices. Interacts with the large tegument protein/LTP.

It localises to the virion. Its subcellular location is the host nucleus. Capsid vertex-specific component that plays a role during viral DNA encapsidation, assuring correct genome cleavage and presumably stabilizing capsids that contain full-length viral genomes. Participates in the interaction between the capsid and the tegument through interaction with the large tegument protein/LTP. The polypeptide is Capsid vertex component 2 (Saimiri sciureus (Common squirrel monkey)).